The following is an 82-amino-acid chain: CLAVATA3/ESR (CLE)-related protein 53 (82 aa).

Residues 1-26 (MATSTNSREFLIFICVLTLLVVRSEA) form the signal peptide. Hydroxyproline occurs at positions 74 and 77. O-linked (Ara...) hydroxyproline glycosylation is present at P77.

It belongs to the CLV3/ESR signal peptide family. In terms of processing, the O-glycosylation (arabinosylation) of the hydroxyproline Pro-77 enhances binding affinity of the CLE53p peptide for its receptor. Expressed in root vasculature.

It localises to the secreted. Its subcellular location is the extracellular space. Its function is as follows. Signaling peptide involved in the regulation of root colonization by arbuscular mycorrhizal (AM) fungi. Moves from root to shoot to function with the receptor kinase SUNN, in a signaling pathway that repress strigolactone biosynthetic genes and strigolactone content in the roots, and consequently reduces the promotion of further colonization by AM fungi. This chain is CLAVATA3/ESR (CLE)-related protein 53, found in Medicago truncatula (Barrel medic).